Consider the following 97-residue polypeptide: RNA-binding protein YhbY (97 aa).

In terms of domain architecture, CRM spans 1 to 97; sequence MNLSTKQKQH…TKERKISLPR (97 aa).

In Escherichia coli O157:H7, this protein is RNA-binding protein YhbY (yhbY).